Consider the following 227-residue polypeptide: Octanoyltransferase (227 aa).

A BPL/LPL catalytic domain is found at 47–223 (EDTADEIWLL…HLLRLLPPGV (177 aa)). Residues 87-94 (RGGQITYH), 154-156 (ALG), and 167-169 (GLA) contribute to the substrate site. The active-site Acyl-thioester intermediate is the C185.

It belongs to the LipB family.

Its subcellular location is the cytoplasm. It catalyses the reaction octanoyl-[ACP] + L-lysyl-[protein] = N(6)-octanoyl-L-lysyl-[protein] + holo-[ACP] + H(+). The protein operates within protein modification; protein lipoylation via endogenous pathway; protein N(6)-(lipoyl)lysine from octanoyl-[acyl-carrier-protein]: step 1/2. In terms of biological role, catalyzes the transfer of endogenously produced octanoic acid from octanoyl-acyl-carrier-protein onto the lipoyl domains of lipoate-dependent enzymes. Lipoyl-ACP can also act as a substrate although octanoyl-ACP is likely to be the physiological substrate. The protein is Octanoyltransferase of Azoarcus sp. (strain BH72).